The sequence spans 59 residues: Preprotein translocase subunit SecG (59 aa).

Over 1-33 (MARRESSGGSGGLMSSAGLMRYFEAEESAIKID) the chain is Cytoplasmic. A helical transmembrane segment spans residues 34–55 (PKTVIIAAVASGAFIWILNFTY). The Extracellular portion of the chain corresponds to 56-59 (GRFW).

It belongs to the SEC61-beta family. Component of the protein translocase complex. Heterotrimer consisting of alpha (SecY), beta (SecG) and gamma (SecE) subunits. Can form oligomers of the heterotrimer.

It is found in the cell membrane. Involved in protein export. The function of the beta subunit is unknown, but it may be involved in stabilization of the trimeric complex. The protein is Preprotein translocase subunit SecG of Methanocella arvoryzae (strain DSM 22066 / NBRC 105507 / MRE50).